Consider the following 1108-residue polypeptide: Retinal guanylyl cyclase 2 (1108 aa).

The N-terminal stretch at 1 to 50 (MFLGPWPFSRLLSWFAISSRLSGQHGLPSSKFLRCLCLLALLPLLRWGQA) is a signal peptide. Over 51 to 469 (LPYKIGVIGP…CQGGIDPALA (419 aa)) the chain is Extracellular. A disulfide bond links Cys-104 and Cys-132. Residues 470–490 (MMVCFALLIALLSINGFAYFI) form a helical membrane-spanning segment. The Cytoplasmic segment spans residues 491–1108 (RRRINKIQLI…AERQLVRNKP (618 aa)). The Protein kinase domain maps to 532–812 (FQIISEVQSG…DEIFNQFKTF (281 aa)). The Guanylate cyclase domain maps to 884-1014 (TLYFSDIVGF…DTVNTASRME (131 aa)).

The protein belongs to the adenylyl cyclase class-4/guanylyl cyclase family. In terms of assembly, homodimer. Interacts with RD3; promotes the exit of GUCY2F from the endoplasmic reticulum and its trafficking to the photoreceptor outer segments. There are 9 conserved cysteine residues in sensory guanylate cyclases, 6 in the extracellular domain, which may be involved in intra- or interchain disulfide bonds. As to expression, retina.

It is found in the membrane. It localises to the photoreceptor outer segment membrane. The catalysed reaction is GTP = 3',5'-cyclic GMP + diphosphate. With respect to regulation, activated by GUCA1B when free calcium ions concentration is low, and inhibited by GUCA1B when free calcium ions concentration is high. Inhibited by RD3. In terms of biological role, responsible for the synthesis of cyclic GMP (cGMP) in rods and cones of photoreceptors. Plays an essential role in phototransduction, by mediating cGMP replenishment. May also participate in the trafficking of membrane-asociated proteins to the photoreceptor outer segment membrane. The polypeptide is Retinal guanylyl cyclase 2 (Mus musculus (Mouse)).